The primary structure comprises 406 residues: Tubby-like F-box protein 11 (406 aa).

In terms of domain architecture, F-box spans S53 to G108.

This sequence belongs to the TUB family. In terms of tissue distribution, ubiquitous.

The protein is Tubby-like F-box protein 11 (TULP11) of Oryza sativa subsp. japonica (Rice).